The chain runs to 299 residues: Hemolysin C homolog (299 aa).

2 consecutive CBS domains span residues 80–142 and 145–202; these read MVPR…NGRL and LIRK…IDDE.

This sequence belongs to the UPF0053 family. Hemolysin C subfamily.

In Rickettsia rickettsii (strain Sheila Smith), this protein is Hemolysin C homolog (tlyC).